A 700-amino-acid polypeptide reads, in one-letter code: non-specific serine/threonine protein kinase Cdc7 (700 aa).

One can recognise a Protein kinase domain in the interval 127 to 644; that stretch reads FDVHSRIGNG…AEEALKHPFF (518 aa). Residues 133–141 and Lys-163 each bind ATP; that span reads IGNGTFSTV. The active-site Proton acceptor is Asp-250.

Belongs to the protein kinase superfamily. Ser/Thr protein kinase family. Component of the Dbf4-dependent kinase (DDK) complex consisting of Cdc7 and the Dbf4 ortholog chif. Interacts with chif (via the processed polypeptide Chiffon-A); the interaction is direct.

It catalyses the reaction L-seryl-[protein] + ATP = O-phospho-L-seryl-[protein] + ADP + H(+). It carries out the reaction L-threonyl-[protein] + ATP = O-phospho-L-threonyl-[protein] + ADP + H(+). Activated by chif. Inhibited by the synthetic compound XL413. Its function is as follows. Catalytic component of the Dbf4-dependent kinase (DDK) complex. Phosphorylates components of the pre-replication complex, including Mcm2 and, to a lesser extent, Mcm4. Phosphorylates histones, including H3 and H2B. Required for DNA replication and mitotic proliferation, including during the endoreplication and amplification stages of DNA replication in egg chamber follicle cells of the ovary. This chain is non-specific serine/threonine protein kinase Cdc7, found in Drosophila melanogaster (Fruit fly).